The following is a 374-amino-acid chain: Flagellar P-ring protein 1 (374 aa).

The N-terminal stretch at 1 to 29 (MPGVRWVRIVGVACAALSALALSVTSASA) is a signal peptide.

This sequence belongs to the FlgI family. The basal body constitutes a major portion of the flagellar organelle and consists of four rings (L,P,S, and M) mounted on a central rod.

The protein resides in the periplasm. Its subcellular location is the bacterial flagellum basal body. Its function is as follows. Assembles around the rod to form the L-ring and probably protects the motor/basal body from shearing forces during rotation. The sequence is that of Flagellar P-ring protein 1 from Bradyrhizobium diazoefficiens (strain JCM 10833 / BCRC 13528 / IAM 13628 / NBRC 14792 / USDA 110).